The sequence spans 157 residues: Small ribosomal subunit protein uS7 (157 aa).

The protein belongs to the universal ribosomal protein uS7 family. As to quaternary structure, part of the 30S ribosomal subunit. Contacts proteins S9 and S11.

Its function is as follows. One of the primary rRNA binding proteins, it binds directly to 16S rRNA where it nucleates assembly of the head domain of the 30S subunit. Is located at the subunit interface close to the decoding center, probably blocks exit of the E-site tRNA. In Acidovorax ebreus (strain TPSY) (Diaphorobacter sp. (strain TPSY)), this protein is Small ribosomal subunit protein uS7.